Reading from the N-terminus, the 319-residue chain is ATP-dependent 6-phosphofructokinase (319 aa).

Gly11 is an ATP binding site. An ADP-binding site is contributed by 21 to 25; that stretch reads RAVVR. ATP-binding positions include 72-73 and 102-105; these read RC and GDGS. Asp103 contacts Mg(2+). Substrate is bound at residue 125 to 127; sequence TID. Asp127 functions as the Proton acceptor in the catalytic mechanism. Position 154 (Arg154) interacts with ADP. Substrate is bound by residues Arg162 and 169 to 171; that span reads MGR. ADP-binding positions include 185-187, Arg211, and 213-215; these read GAE and KKH. Substrate contacts are provided by residues Glu222, Arg243, and 249–252; that span reads HVQR.

The protein belongs to the phosphofructokinase type A (PFKA) family. ATP-dependent PFK group I subfamily. Prokaryotic clade 'B1' sub-subfamily. Homotetramer. Mg(2+) serves as cofactor.

It is found in the cytoplasm. It carries out the reaction beta-D-fructose 6-phosphate + ATP = beta-D-fructose 1,6-bisphosphate + ADP + H(+). It participates in carbohydrate degradation; glycolysis; D-glyceraldehyde 3-phosphate and glycerone phosphate from D-glucose: step 3/4. Allosterically activated by ADP and other diphosphonucleosides, and allosterically inhibited by phosphoenolpyruvate. Functionally, catalyzes the phosphorylation of D-fructose 6-phosphate to fructose 1,6-bisphosphate by ATP, the first committing step of glycolysis. The sequence is that of ATP-dependent 6-phosphofructokinase from Bacillus mycoides (strain KBAB4) (Bacillus weihenstephanensis).